Reading from the N-terminus, the 421-residue chain is Inner membrane protein YihN (421 aa).

The Periplasmic portion of the chain corresponds to 1–44 (MLTKKKWALFSLLTLCGGTIYKLPSLKDAFYIPMQEYFHLTNGQ). A helical transmembrane segment spans residues 45 to 65 (IGNAMSVNSFVTTVGFFLSIY). The Cytoplasmic segment spans residues 66-73 (FADKLPRR). A helical transmembrane segment spans residues 74-91 (YTMSFSLIATGLLGVYLT). Topologically, residues 92 to 95 (TMPG) are periplasmic. A helical transmembrane segment spans residues 96–118 (YWGILFVWALFGVTCDMMNWPVL). Residues 119 to 146 (LKSVSRLGNSEQQGRLFGFFETGRGIVD) are Cytoplasmic-facing. A helical membrane pass occupies residues 147-167 (TVVAFSALAVFTWFGSGLLGF). Position 168 (Lys168) is a topological domain, periplasmic. The helical transmembrane segment at 169-189 (AGIWFYSLIVIAVGIIIFFVL) threads the bilayer. The Cytoplasmic portion of the chain corresponds to 190-220 (NDKEEAPSVEVKKEDGASKNTSMTSVLKDKT). 2 helical membrane-spanning segments follow: residues 221-241 (IWLI…LTFF) and 242-262 (IPFL…YGII). Topologically, residues 263–288 (NQYCLKMIGGPIGGMISDKILKSPSK) are cytoplasmic. A run of 2 helical transmembrane segments spans residues 289-309 (YLCY…MLPH) and 310-330 (ESMP…IVFT). Topologically, residues 331–354 (QRAVFFAPIGEAKIAENKTGAAMA) are cytoplasmic. A helical transmembrane segment spans residues 355-375 (LGSFIGYAPAMFCFSLYGYIL). Over 376 to 385 (DLNPGIIGYK) the chain is Periplasmic. The helical transmembrane segment at 386-406 (IVFGIMACFAFSGAVVSVMLV) threads the bilayer. Topologically, residues 407–421 (KRISQRKKEMLAAEA) are cytoplasmic.

Belongs to the major facilitator superfamily.

The protein resides in the cell inner membrane. The polypeptide is Inner membrane protein YihN (yihN) (Escherichia coli (strain K12)).